A 71-amino-acid chain; its full sequence is DNA-directed RNA polymerases II, IV and V subunit 10 (71 aa).

The Zn(2+) site is built by Cys7, Cys10, Cys44, and Cys45.

This sequence belongs to the archaeal Rpo10/eukaryotic RPB10 RNA polymerase subunit family. Component of the RNA polymerase II, IV and V complexes. Interacts with NRPD1.

The protein resides in the nucleus. Its function is as follows. DNA-dependent RNA polymerase catalyzes the transcription of DNA into RNA using the four ribonucleoside triphosphates as substrates. Component of RNA polymerase II which synthesizes mRNA precursors and many functional non-coding RNAs. Pol II is the central component of the basal RNA polymerase II transcription machinery. It is composed of mobile elements that move relative to each other. Component of RNA polymerases IV and V which mediate short-interfering RNAs (siRNA) accumulation and subsequent RNA-directed DNA methylation-dependent (RdDM) transcriptional gene silencing (TGS) of endogenous repeated sequences, including transposable elements. In Arabidopsis thaliana (Mouse-ear cress), this protein is DNA-directed RNA polymerases II, IV and V subunit 10 (NRPB10).